A 189-amino-acid polypeptide reads, in one-letter code: Parkinson disease protein 7 homolog (189 aa).

At Ala-2 the chain carries N-acetylalanine. 2 S-palmitoyl cysteine lipidation sites follow: Cys-46 and Cys-53. At Tyr-67 the chain carries Phosphotyrosine. Cys-106 acts as the Nucleophile in catalysis. Residue Cys-106 is modified to Cysteine sulfinic acid (-SO2H); alternate. Cys-106 is lipidated: S-palmitoyl cysteine; alternate. Residue His-126 is part of the active site. Residue Lys-130 forms a Glycyl lysine isopeptide (Lys-Gly) (interchain with G-Cter in SUMO) linkage. Lys-148 is modified (N6-acetyllysine). The residue at position 182 (Lys-182) is an N6-succinyllysine.

It belongs to the peptidase C56 family. In terms of assembly, homodimer. Binds EFCAB6/DJBP and PIAS2. Part of a ternary complex containing PARK7, EFCAB6/DJBP and AR. Binds to HIPK1. Interacts (via N-terminus) with OTUD7B. Interacts with BBS1, CLCF1 and MTERF. Interacts (via C-terminus) with NCF1; the interaction is enhanced by LPS and modulates NCF1 phosphorylation and membrane translocation. Interacts with NENF. Requires Deglycase activity does not require glutathione as a cofactor, however, glycated glutathione constitutes a PARK7 substrate. as cofactor. Post-translationally, sumoylated on Lys-130 by PIAS2 or PIAS4; which is essential for cell-growth promoting activity and transforming activity. In terms of processing, undergoes cleavage of a C-terminal peptide and subsequent activation of protease activity in response to oxidative stress. Expressed in erythroblasts and in mature red blood cells from peripheral blood (at protein level). In pancreas, expression is higher in islets than surrounding exocrine tissues.

Its subcellular location is the cell membrane. It is found in the cytoplasm. The protein localises to the membrane raft. It localises to the nucleus. The protein resides in the mitochondrion. Its subcellular location is the endoplasmic reticulum. The catalysed reaction is N(omega)-(1-hydroxy-2-oxopropyl)-L-arginyl-[protein] + H2O = lactate + L-arginyl-[protein] + H(+). It carries out the reaction N(6)-(1-hydroxy-2-oxopropyl)-L-lysyl-[protein] + H2O = lactate + L-lysyl-[protein] + H(+). It catalyses the reaction S-(1-hydroxy-2-oxopropyl)-L-cysteinyl-[protein] + H2O = lactate + L-cysteinyl-[protein] + H(+). The enzyme catalyses N(omega)-(1-hydroxy-2-oxoethyl)-L-arginyl-[protein] + H2O = L-arginyl-[protein] + glycolate + H(+). The catalysed reaction is N(6)-(1-hydroxy-2-oxoethyl)-L-lysyl-[protein] + H2O = glycolate + L-lysyl-[protein] + H(+). It carries out the reaction S-(1-hydroxy-2-oxoethyl)-L-cysteinyl-[protein] + H2O = glycolate + L-cysteinyl-[protein] + H(+). It catalyses the reaction N(2)-(1-hydroxy-2-oxopropyl)-dGTP + H2O = lactate + dGTP + H(+). The enzyme catalyses N(2)-(1-hydroxy-2-oxopropyl)-GTP + H2O = lactate + GTP + H(+). The catalysed reaction is N(2)-(1-hydroxy-2-oxopropyl)-GDP + H2O = lactate + GDP + H(+). It carries out the reaction N(2)-(1-hydroxy-2-oxopropyl)-GMP + H2O = lactate + GMP + H(+). It catalyses the reaction N(2)-(1-hydroxy-2-oxoethyl)-dGTP + H2O = dGTP + glycolate + H(+). The enzyme catalyses N(2)-(1-hydroxy-2-oxoethyl)-GTP + H2O = glycolate + GTP + H(+). The catalysed reaction is N(2)-(1-hydroxy-2-oxoethyl)-GDP + H2O = glycolate + GDP + H(+). It carries out the reaction N(2)-(1-hydroxy-2-oxoethyl)-GMP + H2O = glycolate + GMP + H(+). It catalyses the reaction an N(2)-(1-hydroxy-2-oxopropyl)-guanosine in RNA + H2O = a guanosine in RNA + lactate + H(+). The enzyme catalyses an N(2)-(1-hydroxy-2-oxopropyl)-2'-deoxyguanosine in DNA + H2O = a 2'-deoxyguanosine in DNA + lactate + H(+). The catalysed reaction is an N(2)-(1-hydroxy-2-oxoethyl)-guanosine in RNA + H2O = a guanosine in RNA + glycolate + H(+). It carries out the reaction an N(2)-(1-hydroxy-2-oxoethyl)-2'-deoxyguanosine in DNA + H2O = a 2'-deoxyguanosine in DNA + glycolate + H(+). Its function is as follows. Multifunctional protein with controversial molecular function which plays an important role in cell protection against oxidative stress and cell death acting as oxidative stress sensor and redox-sensitive chaperone and protease. It is involved in neuroprotective mechanisms like the stabilization of NFE2L2 and PINK1 proteins, male fertility as a positive regulator of androgen signaling pathway as well as cell growth and transformation through, for instance, the modulation of NF-kappa-B signaling pathway. Has been described as a protein and nucleotide deglycase that catalyzes the deglycation of the Maillard adducts formed between amino groups of proteins or nucleotides and reactive carbonyl groups of glyoxals. But this function is rebuted by other works. As a protein deglycase, repairs methylglyoxal- and glyoxal-glycated proteins, and releases repaired proteins and lactate or glycolate, respectively. Deglycates cysteine, arginine and lysine residues in proteins, and thus reactivates these proteins by reversing glycation by glyoxals. Acts on early glycation intermediates (hemithioacetals and aminocarbinols), preventing the formation of advanced glycation endproducts (AGE) that cause irreversible damage. Also functions as a nucleotide deglycase able to repair glycated guanine in the free nucleotide pool (GTP, GDP, GMP, dGTP) and in DNA and RNA. Is thus involved in a major nucleotide repair system named guanine glycation repair (GG repair), dedicated to reversing methylglyoxal and glyoxal damage via nucleotide sanitization and direct nucleic acid repair. Protects histones from adduction by methylglyoxal, controls the levels of methylglyoxal-derived argininine modifications on chromatin. Able to remove the glycations and restore histone 3, histone glycation disrupts both local and global chromatin architecture by altering histone-DNA interactions as well as histone acetylation and ubiquitination levels. Displays a very low glyoxalase activity that may reflect its deglycase activity. Eliminates hydrogen peroxide and protects cells against hydrogen peroxide-induced cell death. Required for correct mitochondrial morphology and function as well as for autophagy of dysfunctional mitochondria. Plays a role in regulating expression or stability of the mitochondrial uncoupling proteins SLC25A14 and SLC25A27 in dopaminergic neurons of the substantia nigra pars compacta and attenuates the oxidative stress induced by calcium entry into the neurons via L-type channels during pacemaking. Regulates astrocyte inflammatory responses, may modulate lipid rafts-dependent endocytosis in astrocytes and neuronal cells. In pancreatic islets, involved in the maintenance of mitochondrial reactive oxygen species (ROS) levels and glucose homeostasis in an age- and diet dependent manner. Protects pancreatic beta cells from cell death induced by inflammatory and cytotoxic setting. Binds to a number of mRNAs containing multiple copies of GG or CC motifs and partially inhibits their translation but dissociates following oxidative stress. Metal-binding protein able to bind copper as well as toxic mercury ions, enhances the cell protection mechanism against induced metal toxicity. In macrophages, interacts with the NADPH oxidase subunit NCF1 to direct NADPH oxidase-dependent ROS production, and protects against sepsis. The sequence is that of Parkinson disease protein 7 homolog from Mus musculus (Mouse).